The chain runs to 190 residues: Homeobox protein SEBOX (190 aa).

The span at 1-11 (MPSPVDASSAD) shows a compositional bias: low complexity. Disordered stretches follow at residues 1–24 (MPSPVDASSADGGSGLGSHRRKRT) and 82–161 (ILSP…VHPS). The homeobox DNA-binding region spans 19–78 (HRRKRTTFSKGQLLELERAFAAWPYPNISTHEHLAWVTCLPEAKVQVWFQKRWAKIIKNR). The segment covering 89–100 (CPQSSCSLPDTL) has biased composition (polar residues).

Belongs to the paired homeobox family.

The protein localises to the nucleus. Probable transcription factor involved in the control of specification of mesoderm and endoderm. In Homo sapiens (Human), this protein is Homeobox protein SEBOX (SEBOX).